A 290-amino-acid chain; its full sequence is ATP synthase gamma chain (290 aa).

The protein belongs to the ATPase gamma chain family. In terms of assembly, F-type ATPases have 2 components, CF(1) - the catalytic core - and CF(0) - the membrane proton channel. CF(1) has five subunits: alpha(3), beta(3), gamma(1), delta(1), epsilon(1). CF(0) has three main subunits: a, b and c.

It localises to the cell inner membrane. Its function is as follows. Produces ATP from ADP in the presence of a proton gradient across the membrane. The gamma chain is believed to be important in regulating ATPase activity and the flow of protons through the CF(0) complex. This Dinoroseobacter shibae (strain DSM 16493 / NCIMB 14021 / DFL 12) protein is ATP synthase gamma chain.